The chain runs to 368 residues: Quinolinate synthase (368 aa).

Iminosuccinate-binding residues include H46 and S63. C110 lines the [4Fe-4S] cluster pocket. Residues 141–143 and S162 each bind iminosuccinate; that span reads YVN. Residue C230 participates in [4Fe-4S] cluster binding. Iminosuccinate-binding positions include 256–258 and T273; that span reads HPE. C320 lines the [4Fe-4S] cluster pocket.

The protein belongs to the quinolinate synthase family. Type 3 subfamily. [4Fe-4S] cluster is required as a cofactor.

It localises to the cytoplasm. The catalysed reaction is iminosuccinate + dihydroxyacetone phosphate = quinolinate + phosphate + 2 H2O + H(+). Its pathway is cofactor biosynthesis; NAD(+) biosynthesis; quinolinate from iminoaspartate: step 1/1. In terms of biological role, catalyzes the condensation of iminoaspartate with dihydroxyacetone phosphate to form quinolinate. In Bacillus cereus (strain ZK / E33L), this protein is Quinolinate synthase.